The chain runs to 149 residues: Sex-regulated protein janus-A (149 aa).

K46 serves as a coordination point for substrate. Catalysis depends on H77, which acts as the Proton acceptor. Residue 118–120 participates in substrate binding; that stretch reads STG.

Belongs to the janus family.

Its function is as follows. JanA and janB regulate somatic sex differentiation. The sequence is that of Sex-regulated protein janus-A (janA) from Drosophila pseudoobscura pseudoobscura (Fruit fly).